The primary structure comprises 348 residues: Heat-inducible transcription repressor HrcA (348 aa).

It belongs to the HrcA family.

In terms of biological role, negative regulator of class I heat shock genes (grpE-dnaK-dnaJ and groELS operons). Prevents heat-shock induction of these operons. In Ruminiclostridium cellulolyticum (strain ATCC 35319 / DSM 5812 / JCM 6584 / H10) (Clostridium cellulolyticum), this protein is Heat-inducible transcription repressor HrcA.